Reading from the N-terminus, the 278-residue chain is uncharacterized protein (278 aa).

This is an uncharacterized protein from Schizosaccharomyces pombe (strain 972 / ATCC 24843) (Fission yeast).